A 383-amino-acid polypeptide reads, in one-letter code: Protein FAM217B (383 aa).

Disordered stretches follow at residues 1–70 (MNAG…CQGA), 89–115 (ADED…PPDL), 200–222 (KAKG…KSPG), 232–251 (SKPL…RKKA), 284–325 (QTLE…HIRV), and 338–383 (SCKA…YKLK). Polar residues predominate over residues 8-43 (NKVQHSKNSSGKRQSKSQVPHASSQPRSSLTAVTQP). Basic and acidic residues predominate over residues 44–56 (TEEKLKESISPEA). A compositionally biased stretch (polar residues) spans 374–383 (GVKQNTYKLK).

This sequence belongs to the FAM217 family.

This chain is Protein FAM217B (FAM217B), found in Homo sapiens (Human).